The sequence spans 476 residues: Inosine-5'-monophosphate dehydrogenase (476 aa).

2 CBS domains span residues Met92–Val150 and Met151–Ser207. Residues Asp244 and Gly294 to Gly296 contribute to the NAD(+) site. Residues Gly296 and Gly298 each contribute to the K(+) site. Residue Ser299 participates in IMP binding. Cys301 lines the K(+) pocket. Cys301 acts as the Thioimidate intermediate in catalysis. IMP contacts are provided by residues Asp334–Gly336, Gly357–Ser358, Tyr381–Ala385, and Glu413. Residues Glu467 and Ser468 each coordinate K(+).

The protein belongs to the IMPDH/GMPR family. As to quaternary structure, homotetramer. The cofactor is K(+).

It catalyses the reaction IMP + NAD(+) + H2O = XMP + NADH + H(+). Its pathway is purine metabolism; XMP biosynthesis via de novo pathway; XMP from IMP: step 1/1. Mycophenolic acid (MPA) is a non-competitive inhibitor that prevents formation of the closed enzyme conformation by binding to the same site as the amobile flap. In contrast, mizoribine monophosphate (MZP) is a competitive inhibitor that induces the closed conformation. MPA is a potent inhibitor of mammalian IMPDHs but a poor inhibitor of the bacterial enzymes. MZP is a more potent inhibitor of bacterial IMPDH. Functionally, catalyzes the conversion of inosine 5'-phosphate (IMP) to xanthosine 5'-phosphate (XMP), the first committed and rate-limiting step in the de novo synthesis of guanine nucleotides, and therefore plays an important role in the regulation of cell growth. The polypeptide is Inosine-5'-monophosphate dehydrogenase (Nitrosopumilus maritimus (strain SCM1)).